Reading from the N-terminus, the 220-residue chain is N-(5'-phosphoribosyl)anthranilate isomerase (220 aa).

This sequence belongs to the TrpF family.

It carries out the reaction N-(5-phospho-beta-D-ribosyl)anthranilate = 1-(2-carboxyphenylamino)-1-deoxy-D-ribulose 5-phosphate. The protein operates within amino-acid biosynthesis; L-tryptophan biosynthesis; L-tryptophan from chorismate: step 3/5. In Xylella fastidiosa (strain M23), this protein is N-(5'-phosphoribosyl)anthranilate isomerase.